The chain runs to 285 residues: Homeobox protein Hox-A4 (285 aa).

Disordered regions lie at residues 19 to 70 and 94 to 130; these read PFEE…APRA and ASPG…TTPA. Over residues 27-41 the composition is skewed to gly residues; that stretch reads GGPGGGDGAVGGGPG. Low complexity predominate over residues 44 to 70; it reads RPQSAPHLPAPNPHAARQPPAYYAPRA. Residues 106 to 118 show a composition bias toward pro residues; that stretch reads GAHPSPAPQPPVP. An Antp-type hexapeptide motif is present at residues 159–164; it reads VYPWMK. Positions 180-239 form a DNA-binding region, homeobox; sequence PKRSRTAYTRQQVLELEKEFHFNRYLTRRRRIEIAHTLCLSERQVKIWFQNRRMKWKKDH. The interval 238-285 is disordered; the sequence is DHKLPNTKMRSSNTASAPAGPPGKAQTHSPHHHPHPLPGASTPIPSSI.

The protein belongs to the Antp homeobox family. Deformed subfamily.

The protein resides in the nucleus. In terms of biological role, sequence-specific transcription factor which is part of a developmental regulatory system that provides cells with specific positional identities on the anterior-posterior axis. Binds to sites in the 5'-flanking sequence of its coding region with various affinities. The consensus sequences of the high and low affinity binding sites are 5'-TAATGA[CG]-3' and 5'-CTAATTTT-3'. This chain is Homeobox protein Hox-A4 (Hoxa4), found in Mus musculus (Mouse).